A 619-amino-acid chain; its full sequence is MKSLLDSLNFPKDLKNLSDSDTEILSKEIRQFLIESVSKTGGHLSSNLGVVELTLSLMKSFDFEKDKIVWDVGHQSYVYKILTGRKDGFKNLRQFNGLSGFPKRNESKYDYFDTGHSSTSISAGLGMARARDLKGEKYTVVSVIGDGALTGGMALEALNDVGFRKTKMVIILNDNQMSISVNVGGLSRYLNKLRMGETYNRLKTNINTSLGSSDLGKDLISKMSKVKDSIKQLVVPSMFFENMGVKYIGPIDGHDIKAMNEVFSKVKDIEGPVIIHTVTQKGRGYSLAEKSPSKYHGIPPSNDKKEEPNKACRDSYSKAFGNALIDIAKEEKEVVAITAAMPDGTGLKDFATTYPERFFDVGIAEQHAVTLAAGMAANGLKPVFAVYSTFLQRGFDQVIHDVCIQDLPVTFAIDRAGIVGDDGETHQGIMDVSYLSMMPNMTIVAPKCTEEIPSMLRWAIKKNSPVAIRYPRGKDIVCNLDALQEISYGKWEVVSEGKKICIIASGRMLQHALLAKEILKEKGIDPKIVNATFIKPIDKCLLENLKEDGYDILTIEDNIICGGLGISILEYLNYIDYNGNMKLLGYNDEFIPQGNVEILYRTYGLDPVSISNTILKFYN.

Residues histidine 74 and glycine 115–serine 117 each bind thiamine diphosphate. Aspartate 146 is a binding site for Mg(2+). Residues glycine 147–alanine 148, asparagine 175, and tyrosine 285 contribute to the thiamine diphosphate site. Asparagine 175 lines the Mg(2+) pocket. A disordered region spans residues glutamate 289–lysine 310. Position 365 (glutamate 365) interacts with thiamine diphosphate.

It belongs to the transketolase family. DXPS subfamily. Homodimer. Requires Mg(2+) as cofactor. The cofactor is thiamine diphosphate.

The catalysed reaction is D-glyceraldehyde 3-phosphate + pyruvate + H(+) = 1-deoxy-D-xylulose 5-phosphate + CO2. Its pathway is metabolic intermediate biosynthesis; 1-deoxy-D-xylulose 5-phosphate biosynthesis; 1-deoxy-D-xylulose 5-phosphate from D-glyceraldehyde 3-phosphate and pyruvate: step 1/1. Functionally, catalyzes the acyloin condensation reaction between C atoms 2 and 3 of pyruvate and glyceraldehyde 3-phosphate to yield 1-deoxy-D-xylulose-5-phosphate (DXP). This is 1-deoxy-D-xylulose-5-phosphate synthase from Clostridium botulinum (strain Alaska E43 / Type E3).